The primary structure comprises 140 residues: NTF2-related export protein 1 (140 aa).

Alanine 2 is subject to N-acetylalanine. Residues 16–135 enclose the NTF2 domain; that stretch reads AAEEFVNVYY…WKIASDCFRF (120 aa).

As to quaternary structure, heterodimer with NXF1. Forms a complex with RANGAP1, RANBP2/NUP358 and NXF1. Interacts (via NTF2 domain) with NXF1. Stabilizes the NTF2 domain of NXF1 by heterodimerization. The formation of NXF1-NXT1 heterodimers is required for the NXF1-mediated nuclear mRNA export. Preferentially binds Ran-GTP. Associates with NXF2, NXF3 and NXF5. Does not bind nucleoporins (NPC) directly, its association to NPC is mediated by NXF1.

It is found in the nucleus. The protein localises to the nucleus speckle. Its subcellular location is the cytoplasm. Stimulator of protein export for NES-containing proteins. Also plays a role in the nuclear export of U1 snRNA, tRNA, and mRNA. The NXF1-NXT1 heterodimer is involved in the export of HSP70 mRNA in conjunction with ALYREF/THOC4 and THOC5. In Bos taurus (Bovine), this protein is NTF2-related export protein 1 (NXT1).